The chain runs to 92 residues: ATP synthase subunit c (92 aa).

2 helical membrane-spanning segments follow: residues 20–40 (GAGLVAVGAGLASIGNFGTGL) and 71–91 (MAISESASLYSFIIAILLVFV).

The protein belongs to the ATPase C chain family. As to quaternary structure, F-type ATPases have 2 components, F(1) - the catalytic core - and F(0) - the membrane proton channel. F(1) has five subunits: alpha(3), beta(3), gamma(1), delta(1), epsilon(1). F(0) has three main subunits: a(1), b(2) and c(10-14). The alpha and beta chains form an alternating ring which encloses part of the gamma chain. F(1) is attached to F(0) by a central stalk formed by the gamma and epsilon chains, while a peripheral stalk is formed by the delta and b chains.

It is found in the cell membrane. F(1)F(0) ATP synthase produces ATP from ADP in the presence of a proton or sodium gradient. F-type ATPases consist of two structural domains, F(1) containing the extramembraneous catalytic core and F(0) containing the membrane proton channel, linked together by a central stalk and a peripheral stalk. During catalysis, ATP synthesis in the catalytic domain of F(1) is coupled via a rotary mechanism of the central stalk subunits to proton translocation. In terms of biological role, key component of the F(0) channel; it plays a direct role in translocation across the membrane. A homomeric c-ring of between 10-14 subunits forms the central stalk rotor element with the F(1) delta and epsilon subunits. The sequence is that of ATP synthase subunit c from Mycoplasmopsis pulmonis (strain UAB CTIP) (Mycoplasma pulmonis).